The sequence spans 457 residues: Sensor protein CpxA (457 aa).

Over 1 to 7 (MIGSLTA) the chain is Cytoplasmic. The helical transmembrane segment at 8–29 (RIFAIFWLTLALVLMLVLMLPK) threads the bilayer. Residues 30 to 163 (LDSRQMTELL…SDFINLLFDR (134 aa)) are Periplasmic-facing. Residues 164-184 (PLLLLIVTMLVSTPLLLWLAW) traverse the membrane as a helical segment. Residues 185–237 (SLAKPARKLKNAADEVAQGNLRQHPELEAGPQEFLAAGASFNQMVTALERMMT) enclose the HAMP domain. The Cytoplasmic portion of the chain corresponds to 185 to 457 (SLAKPARKLK…VIWLPLYKRS (273 aa)). The Histidine kinase domain maps to 245-455 (DISHELRTPL…RLVIWLPLYK (211 aa)). H248 carries the post-translational modification Phosphohistidine; by autocatalysis.

Its subcellular location is the cell inner membrane. The catalysed reaction is ATP + protein L-histidine = ADP + protein N-phospho-L-histidine.. Functionally, this protein is involved in several diverse cellular processes, such as the functioning of acetohydroxyacid synthetase I, in the biosynthesis of isoleucine and valine, the TraJ protein activation activity for tra gene expression in F plasmid, and the synthesis, translocation, or stability of cell envelope proteins. Activates CpxR by phosphorylation. The polypeptide is Sensor protein CpxA (cpxA) (Escherichia coli O157:H7).